The following is a 633-amino-acid chain: ATP-dependent clpX-like chaperone, mitochondrial (633 aa).

The N-terminal 56 residues, Met1–Thr56, are a transit peptide targeting the mitochondrion. The interval Ala65–Asn101 is disordered. Over residues Gly69–Val83 the composition is skewed to basic and acidic residues. Residues Thr84–Ser93 are compositionally biased toward low complexity. A ClpX-type ZB domain is found at Ser93–Ile146. Zn(2+) is bound by residues Cys105, Cys108, Cys127, and Cys130. ATP is bound at residue Pro294–Leu301. Lys437 carries the post-translational modification N6-acetyllysine. Residues Lys598–Ser610 show a composition bias toward basic and acidic residues. The disordered stretch occupies residues Lys598–Ser633. The segment covering Ser611–Asp622 has biased composition (acidic residues). Phosphoserine is present on Ser617.

This sequence belongs to the ClpX chaperone family. Homohexamer that forms a ring structure; this hexamerization requires ATP binding. Component of the ClpXP complex formed by the assembly of two CLPP heptameric rings with two CLPX hexameric rings, giving rise to a symmetrical structure with two central CLPP rings flanked by a CLPX ring at either end of the complex. Interacts with TFAM.

The protein resides in the mitochondrion. It localises to the mitochondrion matrix. The protein localises to the mitochondrion nucleoid. It catalyses the reaction ATP + H2O = ADP + phosphate + H(+). ATP-dependent chaperone that functions as an unfoldase. As part of the ClpXP protease complex, it recognizes specific protein substrates, unfolds them using energy derived from ATP hydrolysis, and then translocates them to the proteolytic subunit (CLPP) of the ClpXP complex for degradation. Thanks to its chaperone activity, it also functions in the incorporation of the pyridoxal phosphate cofactor into 5-aminolevulinate synthase, thereby activating 5-aminolevulinate (ALA) synthesis, the first step in heme biosynthesis. This chaperone is also involved in the control of mtDNA nucleoid distribution, by regulating mitochondrial transcription factor A (TFAM) activity. This chain is ATP-dependent clpX-like chaperone, mitochondrial, found in Rattus norvegicus (Rat).